The primary structure comprises 384 residues: Signal peptide peptidase-like 3 (384 aa).

The Lumenal segment spans residues 1-8 (MAEQTYSW). A helical membrane pass occupies residues 9–29 (AYSLVDSSQVSTFLISILLIV). The Cytoplasmic portion of the chain corresponds to 30–73 (YGSFRSLNMDFENQDKEKDSNSSSGSFNGNSTNNSIQTIDSTQA). A helical membrane pass occupies residues 74 to 94 (LFLPIGASVSLLVMFFFFDSV). A topological domain (lumenal) is located at residue Gln-95. The helical transmembrane segment at 96–116 (VVFTICTAVLATIAFAFLLLP) threads the bilayer. Residues 117–138 (MCQYLTRPCSPQNKISFGCCGR) lie on the Cytoplasmic side of the membrane. Residues 139–159 (FTAAELLSFSLSVMLVLIWVL) traverse the membrane as a helical segment. Topologically, residues 160–164 (TGHWL) are lumenal. The helical transmembrane segment at 165-185 (LMDALAMGLCVAMIAFVRLPS) threads the bilayer. The Cytoplasmic portion of the chain corresponds to 186–190 (LKVSC). Residues 191–211 (LLLSGLLIYDVFWVFFSAYIF) traverse the membrane as a helical segment. Residue Asp-200 is part of the active site. The Lumenal segment spans residues 212 to 262 (NSNVMVKVATQPADNPLDVLSRKLHLGPNVGRDVPRLSLPGKLVFPSSTGS). A helical transmembrane segment spans residues 263–283 (HFSMLGIGDIVMPGLLLCFVL). Asp-271 is a catalytic residue. The Cytoplasmic segment spans residues 284-311 (RYDNYKKQASGDSCGAPGPANISGRMQK). A helical transmembrane segment spans residues 312–332 (VSYFHCTLIGYFVGLLTATVA). Over 333 to 339 (SRIHRAA) the chain is Lumenal. Residues 340–360 (QPALLYLVPFTLLPLLTMAYL) form a helical membrane-spanning segment. A PAL motif is present at residues 341–343 (PAL). At 361-384 (KGDLRRMWSEPFHSKSSSSRFLEV) the chain is on the cytoplasmic side.

Belongs to the peptidase A22B family. Monomer. Homodimer. Interacts with STIM1 (via transmembrane region and SOAR/CAD domain); the interaction promotes the binding of STIM1 to ORAI1. Post-translationally, not glycosylated.

Its subcellular location is the endoplasmic reticulum membrane. It is found in the golgi apparatus. The protein resides in the membrane. Its activity is regulated as follows. Its proteolytic activity is blocked by a signal peptide peptidase (SPP) inhibitor, (ZLL)2-ketone (ZLL) or a gamma-secretase inhibitor, LY411,575. Intramembrane-cleaving aspartic protease (I-CLiP) that cleaves type II membrane protein substrates in or close to their luminal transmembrane domain boundaries. Acts like a sheddase by mediating the proteolytic release and secretion of active site-containing ectodomains of glycan-modifiying glycosidase and glycosyltransferase enzymes such as MGAT5, B4GAT1 and B4GALT1. Plays a role in the regulation of cellular glycosylation processes. Required to link T-cell antigen receptor (TCR) and calcineurin-NFAT signaling cascades in lymphocytes by promoting the association of STIM1 and ORAI1 during store-operated calcium entry (SOCE) in a protease-independent manner. This Mus musculus (Mouse) protein is Signal peptide peptidase-like 3.